The chain runs to 147 residues: Nudix hydrolase 1 (147 aa).

The residue at position 2 (S2) is an N-acetylserine. The Nudix hydrolase domain occupies 7-140 (IPRVAVVVFI…EKLFGSGFNP (134 aa)). The short motif at 41-62 (GHLEFGESFEECAAREVMEETG) is the Nudix box element. Mg(2+)-binding residues include E56 and E60.

The protein belongs to the Nudix hydrolase family. Homodimer. It depends on Mg(2+) as a cofactor. Mn(2+) serves as cofactor. In terms of tissue distribution, expressed in roots, stems and leaves.

Its subcellular location is the cytoplasm. It carries out the reaction 7,8-dihydroneopterin 3'-triphosphate + H2O = 7,8-dihydroneopterin 3'-phosphate + diphosphate + H(+). It catalyses the reaction NAD(+) + H2O = beta-nicotinamide D-ribonucleotide + AMP + 2 H(+). The enzyme catalyses NADH + H2O = reduced beta-nicotinamide D-ribonucleotide + AMP + 2 H(+). The catalysed reaction is 8-oxo-dGTP + H2O = 8-oxo-dGMP + diphosphate + H(+). Mediates the hydrolysis of some nucleoside diphosphate derivatives. Its substrate specificity is unclear. In vitro, it can use NTP, dNTP, 8-oxo-GTP, 8-oxo-dGTP, dGTP, dATP, dTTP or dihydroneopterin triphosphate (DHNTP) as substrate. Has some NADH pyrophosphatase activity in vitro; however, such activity may not be relevant in vivo due to the high concentration of manganese used during the experiments. Plays an important role in protection against oxidative DNA and RNA damage by removing oxidatively damaged form of guanine. This Arabidopsis thaliana (Mouse-ear cress) protein is Nudix hydrolase 1 (NUDT1).